We begin with the raw amino-acid sequence, 425 residues long: MAKQIQAIRGMNDILPTQSPLWQKVEAVLRASVAAYGYSEIRTPIVENTDLFKRSIGEVTDIVEKEMYTFEDRNGDSLTLRPEGTASTVRAGNEHGLLYNQEQRLWYMGPMFRHERPQKGRYRQFHQFGVEVYGIGSADIDAEVLMLSARLWEKLGISEHVTLELNTLGDPAERAAYREALIAFLEQHKDKLDEDSQRRMYSNPLRVLDSKDPQVQSILGDAPALMDYLGEESSQHFAQLRELLDAVGIQYRVNPRLVRGLDYYNRTVFEWVTNSLGSQGTVLAGGRYDGLVAQLGGKDTPAVGFAMGLERIVLLLETLELTQDIPAAVDVYVAAMGDSCLVEAIKVAQELRSTLPTLRVMSHCGGGNFKKQIKRADKSGAQVALLIGEEELAEGVVTVKYLRNDNEQQRVARNALSAFLAELTK.

Belongs to the class-II aminoacyl-tRNA synthetase family. Homodimer.

The protein localises to the cytoplasm. It carries out the reaction tRNA(His) + L-histidine + ATP = L-histidyl-tRNA(His) + AMP + diphosphate + H(+). This is Histidine--tRNA ligase from Shewanella sp. (strain MR-4).